A 735-amino-acid polypeptide reads, in one-letter code: Disintegrin and metalloproteinase domain-containing protein 2 (735 aa).

Positions 1–15 (MLCLLLLLCGLASLG) are cleaved as a signal peptide. Residues 16–176 (GPLKKYVENS…KIKSIKSSVR (161 aa)) constitute a propeptide that is removed on maturation. Residues 16 to 680 (GPLKKYVENS…EGAYHTKSRK (665 aa)) lie on the Extracellular side of the membrane. Residues Asn-55, Asn-220, and Asn-288 are each glycosylated (N-linked (GlcNAc...) asparagine). Positions 178 to 375 (HYIEMHIIVE…QVSQCLQNQP (198 aa)) constitute a Peptidase M12B domain. Disulfide bonds link Cys-287–Cys-370, Cys-329–Cys-354, Cys-331–Cys-336, and Cys-442–Cys-455. An N-linked (GlcNAc...) asparagine glycan is attached at Asn-353. In terms of domain architecture, Disintegrin spans 384 to 470 (NPVCGNNRVE…ACQEDLYVIN (87 aa)). N-linked (GlcNAc...) asparagine glycans are attached at residues Asn-456 and Asn-564. The EGF-like domain occupies 610-643 (LGYDCTPATCSDHGVCNNKRHCHCNPTYVPPNCE). 3 disulfides stabilise this stretch: Cys-614/Cys-625, Cys-619/Cys-631, and Cys-633/Cys-642. Residues 681–701 (WPFFLIIPFFVIFSVLVATVV) traverse the membrane as a helical segment. Residues 702-735 (KVYYQKKKWKTEDYANDENIESESEPKSSKVSSK) lie on the Cytoplasmic side of the membrane. The tract at residues 716–735 (ANDENIESESEPKSSKVSSK) is disordered. Ser-723 carries the phosphoserine modification.

Heterodimer with ADAM1/fertilin subunit alpha. Post-translationally, the signal and the metalloprotease domain are cleaved during the epididymal maturation of the spermatozoa. As to expression, expressed specifically in testis.

Its subcellular location is the membrane. Functionally, sperm surface membrane protein that may be involved in sperm-egg plasma membrane adhesion and fusion during fertilization. Could have a direct role in sperm-zona binding or migration of sperm from the uterus into the oviduct. Interactions with egg membrane could be mediated via binding between its disintegrin-like domain to one or more integrins receptors on the egg. This is a non catalytic metalloprotease-like protein. In Cavia porcellus (Guinea pig), this protein is Disintegrin and metalloproteinase domain-containing protein 2 (ADAM2).